The following is a 933-amino-acid chain: Phosphoenolpyruvate carboxylase (933 aa).

Residues H158 and K592 contribute to the active site.

The protein belongs to the PEPCase type 1 family. Mg(2+) is required as a cofactor.

It catalyses the reaction oxaloacetate + phosphate = phosphoenolpyruvate + hydrogencarbonate. Functionally, forms oxaloacetate, a four-carbon dicarboxylic acid source for the tricarboxylic acid cycle. This chain is Phosphoenolpyruvate carboxylase, found in Nitrosomonas eutropha (strain DSM 101675 / C91 / Nm57).